Here is a 202-residue protein sequence, read N- to C-terminus: Holliday junction branch migration complex subunit RuvA (202 aa).

A domain I region spans residues 1 to 65 (MIAYVEGRLA…EDALELYGFA (65 aa)). A domain II region spans residues 66-144 (TWDERQTFIV…VEDLPAAAPL (79 aa)). The segment at 145–155 (VTGGAPGGVFR) is flexible linker. The tract at residues 155 to 202 (RDALAGLANLGYGEEEASHVLKEVLHGEPDLDVGGALRAALRALARGR) is domain III.

The protein belongs to the RuvA family. Homotetramer. Forms an RuvA(8)-RuvB(12)-Holliday junction (HJ) complex. HJ DNA is sandwiched between 2 RuvA tetramers; dsDNA enters through RuvA and exits via RuvB. An RuvB hexamer assembles on each DNA strand where it exits the tetramer. Each RuvB hexamer is contacted by two RuvA subunits (via domain III) on 2 adjacent RuvB subunits; this complex drives branch migration. In the full resolvosome a probable DNA-RuvA(4)-RuvB(12)-RuvC(2) complex forms which resolves the HJ.

It localises to the cytoplasm. Its function is as follows. The RuvA-RuvB-RuvC complex processes Holliday junction (HJ) DNA during genetic recombination and DNA repair, while the RuvA-RuvB complex plays an important role in the rescue of blocked DNA replication forks via replication fork reversal (RFR). RuvA specifically binds to HJ cruciform DNA, conferring on it an open structure. The RuvB hexamer acts as an ATP-dependent pump, pulling dsDNA into and through the RuvAB complex. HJ branch migration allows RuvC to scan DNA until it finds its consensus sequence, where it cleaves and resolves the cruciform DNA. This chain is Holliday junction branch migration complex subunit RuvA, found in Nitratidesulfovibrio vulgaris (strain DP4) (Desulfovibrio vulgaris).